Reading from the N-terminus, the 413-residue chain is Argininosuccinate synthase (413 aa).

Ala-22–Ser-30 is a binding site for ATP. Residues Tyr-100 and Ser-105 each contribute to the L-citrulline site. Position 130 (Gly-130) interacts with ATP. L-aspartate-binding residues include Thr-132, Asn-136, and Asp-137. Residue Asn-136 coordinates L-citrulline. L-citrulline is bound by residues Arg-140, Ser-189, Ser-198, Glu-274, and Tyr-286.

This sequence belongs to the argininosuccinate synthase family. Type 1 subfamily. Homotetramer.

Its subcellular location is the cytoplasm. The enzyme catalyses L-citrulline + L-aspartate + ATP = 2-(N(omega)-L-arginino)succinate + AMP + diphosphate + H(+). It functions in the pathway amino-acid biosynthesis; L-arginine biosynthesis; L-arginine from L-ornithine and carbamoyl phosphate: step 2/3. In Endomicrobium trichonymphae, this protein is Argininosuccinate synthase.